A 216-amino-acid polypeptide reads, in one-letter code: Kynurenine formamidase (216 aa).

Residue Trp-25 participates in substrate binding. Zn(2+) is bound by residues His-55, His-59, and Asp-61. Catalysis depends on His-65, which acts as the Proton donor/acceptor. Residues His-167 and Glu-179 each contribute to the Zn(2+) site.

The protein belongs to the Cyclase 1 superfamily. KynB family. As to quaternary structure, homodimer. Zn(2+) is required as a cofactor.

It carries out the reaction N-formyl-L-kynurenine + H2O = L-kynurenine + formate + H(+). The protein operates within amino-acid degradation; L-tryptophan degradation via kynurenine pathway; L-kynurenine from L-tryptophan: step 2/2. Functionally, catalyzes the hydrolysis of N-formyl-L-kynurenine to L-kynurenine, the second step in the kynurenine pathway of tryptophan degradation. The sequence is that of Kynurenine formamidase from Cupriavidus necator (strain ATCC 17699 / DSM 428 / KCTC 22496 / NCIMB 10442 / H16 / Stanier 337) (Ralstonia eutropha).